A 235-amino-acid polypeptide reads, in one-letter code: RNA pyrophosphohydrolase (235 aa).

A Nudix hydrolase domain is found at 6 to 149; sequence GFRPNVGIIL…KREVYQLALS (144 aa). Positions 38–59 match the Nudix box motif; sequence GGIKYGETPEQAMFRELHEEVG. A disordered region spans residues 161–235; it reads APLSPYGRGG…PDDTAPKDNS (75 aa). A compositionally biased stretch (basic and acidic residues) spans 171–196; it reads QHRERDGRDARDSRERSSDQGGRNEQ. Over residues 203 to 220 the composition is skewed to low complexity; that stretch reads TVTTTTVIVETVSVSAPT.

This sequence belongs to the Nudix hydrolase family. RppH subfamily. It depends on a divalent metal cation as a cofactor.

Functionally, accelerates the degradation of transcripts by removing pyrophosphate from the 5'-end of triphosphorylated RNA, leading to a more labile monophosphorylated state that can stimulate subsequent ribonuclease cleavage. This is RNA pyrophosphohydrolase from Ralstonia pickettii (strain 12J).